We begin with the raw amino-acid sequence, 430 residues long: Serine--tRNA ligase (430 aa).

237-239 (TAE) contacts L-serine. 268-270 (RSE) lines the ATP pocket. E291 lines the L-serine pocket. 355–358 (EISS) serves as a coordination point for ATP. S391 contacts L-serine.

It belongs to the class-II aminoacyl-tRNA synthetase family. Type-1 seryl-tRNA synthetase subfamily. As to quaternary structure, homodimer. The tRNA molecule binds across the dimer.

Its subcellular location is the cytoplasm. It carries out the reaction tRNA(Ser) + L-serine + ATP = L-seryl-tRNA(Ser) + AMP + diphosphate + H(+). The catalysed reaction is tRNA(Sec) + L-serine + ATP = L-seryl-tRNA(Sec) + AMP + diphosphate + H(+). Its pathway is aminoacyl-tRNA biosynthesis; selenocysteinyl-tRNA(Sec) biosynthesis; L-seryl-tRNA(Sec) from L-serine and tRNA(Sec): step 1/1. In terms of biological role, catalyzes the attachment of serine to tRNA(Ser). Is also able to aminoacylate tRNA(Sec) with serine, to form the misacylated tRNA L-seryl-tRNA(Sec), which will be further converted into selenocysteinyl-tRNA(Sec). This is Serine--tRNA ligase from Shigella dysenteriae serotype 1 (strain Sd197).